We begin with the raw amino-acid sequence, 112 residues long: Large ribosomal subunit protein uL22 (112 aa).

It belongs to the universal ribosomal protein uL22 family. In terms of assembly, part of the 50S ribosomal subunit.

Functionally, this protein binds specifically to 23S rRNA; its binding is stimulated by other ribosomal proteins, e.g. L4, L17, and L20. It is important during the early stages of 50S assembly. It makes multiple contacts with different domains of the 23S rRNA in the assembled 50S subunit and ribosome. The globular domain of the protein is located near the polypeptide exit tunnel on the outside of the subunit, while an extended beta-hairpin is found that lines the wall of the exit tunnel in the center of the 70S ribosome. The protein is Large ribosomal subunit protein uL22 of Nitratidesulfovibrio vulgaris (strain ATCC 29579 / DSM 644 / CCUG 34227 / NCIMB 8303 / VKM B-1760 / Hildenborough) (Desulfovibrio vulgaris).